The sequence spans 255 residues: 5'-nucleotidase SurE (255 aa).

Residues Asp8, Asp9, Ser40, and Asn93 each coordinate a divalent metal cation.

This sequence belongs to the SurE nucleotidase family. A divalent metal cation serves as cofactor.

It localises to the cytoplasm. It catalyses the reaction a ribonucleoside 5'-phosphate + H2O = a ribonucleoside + phosphate. Functionally, nucleotidase that shows phosphatase activity on nucleoside 5'-monophosphates. The chain is 5'-nucleotidase SurE from Rhodopseudomonas palustris (strain HaA2).